A 322-amino-acid polypeptide reads, in one-letter code: Probable cAMP-dependent protein kinase catalytic subunit (322 aa).

Residues 7–261 (FEFVKVVGVG…ICEIMGHPFF (255 aa)) form the Protein kinase domain. ATP-binding positions include 13–21 (VGVGAFGKV) and Lys37. Residue Asp132 is the Proton acceptor of the active site. The AGC-kinase C-terminal domain maps to 262–322 (KGIDWHEVES…KHLYKVSKGL (61 aa)).

This sequence belongs to the protein kinase superfamily. AGC Ser/Thr protein kinase family. cAMP subfamily.

The catalysed reaction is L-seryl-[protein] + ATP = O-phospho-L-seryl-[protein] + ADP + H(+). The enzyme catalyses L-threonyl-[protein] + ATP = O-phospho-L-threonyl-[protein] + ADP + H(+). This Encephalitozoon cuniculi (strain GB-M1) (Microsporidian parasite) protein is Probable cAMP-dependent protein kinase catalytic subunit.